The chain runs to 118 residues: Protein MGF 110-6L (118 aa).

A signal peptide spans 1–18; that stretch reads MLVTFLGILGLLASQVSS. Residues 115 to 118 carry the Prevents secretion from ER motif; that stretch reads KDEL.

Belongs to the asfivirus MGF 110 family. In terms of processing, N-glycosylated.

It is found in the host endoplasmic reticulum lumen. Functionally, plays a role in virus cell tropism, and may be required for efficient virus replication in macrophages. The chain is Protein MGF 110-6L from Ornithodoros (relapsing fever ticks).